A 640-amino-acid chain; its full sequence is 1,4-alpha-glucan branching enzyme GlgB (640 aa).

Asp-317 (nucleophile) is an active-site residue. Glu-370 acts as the Proton donor in catalysis.

This sequence belongs to the glycosyl hydrolase 13 family. GlgB subfamily. In terms of assembly, monomer.

The enzyme catalyses Transfers a segment of a (1-&gt;4)-alpha-D-glucan chain to a primary hydroxy group in a similar glucan chain.. It participates in glycan biosynthesis; glycogen biosynthesis. Its function is as follows. Catalyzes the formation of the alpha-1,6-glucosidic linkages in glycogen by scission of a 1,4-alpha-linked oligosaccharide from growing alpha-1,4-glucan chains and the subsequent attachment of the oligosaccharide to the alpha-1,6 position. The polypeptide is 1,4-alpha-glucan branching enzyme GlgB (Nitratidesulfovibrio vulgaris (strain DP4) (Desulfovibrio vulgaris)).